The following is a 94-amino-acid chain: Selenoprotein K (94 aa).

Residues Val-20–Leu-42 traverse the membrane as a helical segment. Positions Val-46–Arg-94 are disordered. Position 92 (Sec-92) is a non-standard amino acid, selenocysteine.

Belongs to the selenoprotein K family. In terms of assembly, interacts with DERL1, DERL2, DERL3 and SELENOS. The SELENOK-SELENOS complex interacts with VCP. Interacts with ZDHHC6. In terms of processing, cleaved by CAPN2/m-calpain in resting macrophages but not in activated macrophages. Macrophage activation up-regulates expression of the calpain inhibitor CAST/calpastatin, resulting in inhibition of CAPN2 activity. Post-translationally, truncated SELENOK proteins produced by failed UGA/Sec decoding are ubiquitinated by the CRL2(KLHDC2) complex, which recognizes the diglycine (Gly-Gly) at the C-terminus of truncated SELENOK proteins. In terms of tissue distribution, high expression in spleen and intestine (at protein level). Expressed in a range of immune cells including T and B-cells and also in myeloid cells including macrophages, neutrophils and dendritic cells (at protein level).

It is found in the endoplasmic reticulum membrane. The protein localises to the cell membrane. Required for Ca(2+) flux in immune cells and plays a role in T-cell proliferation and in T-cell and neutrophil migration. Involved in endoplasmic reticulum-associated degradation (ERAD) of soluble glycosylated proteins. Required for palmitoylation and cell surface expression of CD36 and involved in macrophage uptake of low-density lipoprotein and in foam cell formation. Together with ZDHHC6, required for palmitoylation of ITPR1 in immune cells, leading to regulate ITPR1 stability and function. Plays a role in protection of cells from ER stress-induced apoptosis. Protects cells from oxidative stress when overexpressed in cardiomyocytes. This chain is Selenoprotein K, found in Mus musculus (Mouse).